The following is a 208-amino-acid chain: Segregation and condensation protein B (208 aa).

Belongs to the ScpB family. As to quaternary structure, homodimer. Homodimerization may be required to stabilize the binding of ScpA to the Smc head domains. Component of a cohesin-like complex composed of ScpA, ScpB and the Smc homodimer, in which ScpA and ScpB bind to the head domain of Smc. The presence of the three proteins is required for the association of the complex with DNA.

It is found in the cytoplasm. In terms of biological role, participates in chromosomal partition during cell division. May act via the formation of a condensin-like complex containing Smc and ScpA that pull DNA away from mid-cell into both cell halves. The polypeptide is Segregation and condensation protein B (Mycoplasma pneumoniae (strain ATCC 29342 / M129 / Subtype 1) (Mycoplasmoides pneumoniae)).